The primary structure comprises 105 residues: MTTVSSDRIRIKLKAYDYRILDKAVAEIVDTARNTGAGVAGPIPLPTNIHKFTVNRSVHVDKKSREQFEMRIHKRLMDILEPTQQTVDALGKLSLPAGVDVEIKL.

This sequence belongs to the universal ribosomal protein uS10 family. Part of the 30S ribosomal subunit.

In terms of biological role, involved in the binding of tRNA to the ribosomes. This is Small ribosomal subunit protein uS10 from Oleidesulfovibrio alaskensis (strain ATCC BAA-1058 / DSM 17464 / G20) (Desulfovibrio alaskensis).